Here is a 242-residue protein sequence, read N- to C-terminus: tRNA (guanine-N(1)-)-methyltransferase (242 aa).

S-adenosyl-L-methionine-binding positions include glycine 115 and leucine 134–leucine 139. The segment covering glutamine 210–leucine 224 has biased composition (basic and acidic residues). Residues glutamine 210–alanine 242 are disordered.

Belongs to the RNA methyltransferase TrmD family. As to quaternary structure, homodimer.

It localises to the cytoplasm. The catalysed reaction is guanosine(37) in tRNA + S-adenosyl-L-methionine = N(1)-methylguanosine(37) in tRNA + S-adenosyl-L-homocysteine + H(+). In terms of biological role, specifically methylates guanosine-37 in various tRNAs. The protein is tRNA (guanine-N(1)-)-methyltransferase of Synechococcus sp. (strain WH7803).